The following is a 406-amino-acid chain: Collagen and calcium-binding EGF domain-containing protein 1 (406 aa).

Positions 1 to 34 (MVPPPPSRGGAARGQLGRSLGPLLLLLALGHTWT) are cleaved as a signal peptide. The 42-residue stretch at 134-175 (DIDECASSNGTLCAHICINTLGSYRCECREGYIREDDGKTCT) folds into the EGF-like; calcium-binding domain. 3 disulfides stabilise this stretch: Cys-138-Cys-150, Cys-146-Cys-159, and Cys-161-Cys-174. Asn-142 carries an N-linked (GlcNAc...) asparagine glycan. A glycan (N-linked (GlcNAc...) asparagine) is linked at Asn-182. Disordered stretches follow at residues 244–335 (YLPG…PGSF) and 360–406 (RTHS…DFYP). Collagen-like domains are found at residues 245–290 (LPGP…PMGP) and 300–333 (GRRG…GPPG). A compositionally biased stretch (pro residues) spans 270 to 279 (PGMPGPPGQP). The span at 281–292 (PRGSMGPMGPSP) shows a compositional bias: low complexity. Ser-385 carries an O-linked (Xyl...) (chondroitin sulfate) serine glycan. Basic and acidic residues predominate over residues 386–406 (GDDHPRRTETRDLRAPRDFYP).

This sequence belongs to the CCBE1 family. As to expression, detected in fibroblasts and urine (at protein level). Not expressed in blood or lymphatic endothelial cells.

The protein resides in the secreted. In terms of biological role, required for lymphangioblast budding and angiogenic sprouting from venous endothelium during embryogenesis. This is Collagen and calcium-binding EGF domain-containing protein 1 (CCBE1) from Homo sapiens (Human).